Reading from the N-terminus, the 173-residue chain is ATP synthase subunit b (173 aa).

The chain crosses the membrane as a helical span at residues 15-35 (GVEWGTVIVQVLTFIVLLALL).

Belongs to the ATPase B chain family. As to quaternary structure, F-type ATPases have 2 components, F(1) - the catalytic core - and F(0) - the membrane proton channel. F(1) has five subunits: alpha(3), beta(3), gamma(1), delta(1), epsilon(1). F(0) has three main subunits: a(1), b(2) and c(10-14). The alpha and beta chains form an alternating ring which encloses part of the gamma chain. F(1) is attached to F(0) by a central stalk formed by the gamma and epsilon chains, while a peripheral stalk is formed by the delta and b chains.

The protein resides in the cell membrane. Functionally, f(1)F(0) ATP synthase produces ATP from ADP in the presence of a proton or sodium gradient. F-type ATPases consist of two structural domains, F(1) containing the extramembraneous catalytic core and F(0) containing the membrane proton channel, linked together by a central stalk and a peripheral stalk. During catalysis, ATP synthesis in the catalytic domain of F(1) is coupled via a rotary mechanism of the central stalk subunits to proton translocation. In terms of biological role, component of the F(0) channel, it forms part of the peripheral stalk, linking F(1) to F(0). The chain is ATP synthase subunit b from Staphylococcus aureus (strain MRSA252).